A 290-amino-acid polypeptide reads, in one-letter code: Non-homologous end joining protein Ku (290 aa).

Residues 11–183 (TFGLISMPVR…EAPKITSEVK (173 aa)) enclose the Ku domain. Residues 253 to 290 (MKDQKKGSRLAEVDKESTVQMTPKKPAVKERRGRKRVA) form a disordered region. Residues 254-269 (KDQKKGSRLAEVDKES) are compositionally biased toward basic and acidic residues.

Belongs to the prokaryotic Ku family. In terms of assembly, homodimer. Interacts with LigD.

In terms of biological role, with LigD forms a non-homologous end joining (NHEJ) DNA repair enzyme, which repairs dsDNA breaks with reduced fidelity. Binds linear dsDNA with 5'- and 3'- overhangs but not closed circular dsDNA nor ssDNA. Recruits and stimulates the ligase activity of LigD. The polypeptide is Non-homologous end joining protein Ku (Koribacter versatilis (strain Ellin345)).